We begin with the raw amino-acid sequence, 254 residues long: 5-oxoprolinase subunit A (254 aa).

The protein belongs to the LamB/PxpA family. Forms a complex composed of PxpA, PxpB and PxpC.

It carries out the reaction 5-oxo-L-proline + ATP + 2 H2O = L-glutamate + ADP + phosphate + H(+). In terms of biological role, catalyzes the cleavage of 5-oxoproline to form L-glutamate coupled to the hydrolysis of ATP to ADP and inorganic phosphate. This Burkholderia orbicola (strain MC0-3) protein is 5-oxoprolinase subunit A.